A 301-amino-acid polypeptide reads, in one-letter code: Quinolinate synthase (301 aa).

Positions 21 and 38 each coordinate iminosuccinate. A [4Fe-4S] cluster-binding site is contributed by Cys-83. Iminosuccinate-binding positions include 109 to 111 (YIN) and Ser-126. Cys-169 contributes to the [4Fe-4S] cluster binding site. Residues 195 to 197 (HPE) and Thr-212 each bind iminosuccinate. Residue Cys-257 coordinates [4Fe-4S] cluster.

It belongs to the quinolinate synthase family. Type 2 subfamily. It depends on [4Fe-4S] cluster as a cofactor.

It localises to the cytoplasm. The enzyme catalyses iminosuccinate + dihydroxyacetone phosphate = quinolinate + phosphate + 2 H2O + H(+). It functions in the pathway cofactor biosynthesis; NAD(+) biosynthesis; quinolinate from iminoaspartate: step 1/1. Catalyzes the condensation of iminoaspartate with dihydroxyacetone phosphate to form quinolinate. This chain is Quinolinate synthase, found in Clostridium perfringens (strain SM101 / Type A).